The primary structure comprises 3603 residues: MTKANSIQDIYPLSYMQEGMLFHSLLQKDSQAYVEQASFTIEGKVNPQFFQNSINALVERHDIFRTIFISQNVSSPQQVVLRERNVIVLEEDITHLNEAEQSQFIEQWKEKDRDRGFHLQKDVLMRIALIQTGESQYSCIWTFHHIMMDGWCLSIVLKEFLHIYASYVNASPITLEPVQPYGKYIKWLMEQDKEQAVSYWDHYLSGHEQQTVLPKQKKTKGKSRQEHVTFSFSKEESSRLSELAAREEVTLSTIFHTIWGILLQKYNNNDDAVFGSVISGRPAEIEGIEHMVGLFINTMPVRVQGAKTPFLQLIKDMQKDRLAAEAYSYHPLYEIQSRSAVKQGLIDHILVFENYPVQQEIQMLNKQEHASDLFQIHNFTVADETNYSFYLMVAPGEEIHIKMNYDAEQHDRSFVLSVKEHLLNAVSQILNNPNLPPEEIDITTDTEKRQLIGEITDQTPVYETIHAMFEKQAEKTPDAHAVIDQACSLTYRELNKAANRLARHLRMKGVVRQEPVAIMMERSAAFITGVLGILKAGGAIVPVDPHYPADRIRYILHDCGCSHVVSQAHLPSSLEDNYIITHPEDIESKVDGSNIKSVNNADDLLYMIYTSGTTGKPKGVQFEHRNMANLLKFEYTHSGIDFEADVLQFATPSFDVCYQEIFSALLKGGTLHIVPEAIKRDVPQLFAFINKHQTNIVFLPTAFIKMIFSERELANSFPDGVKHLIAAGEQLMISDLFQDVLRKRGIHLHNHYGPSETHVVSTYTIHPGDPIPELPPIGKPIGCTDLYILNHQKQLQPCGVPGELYISGASVARGYVNHDKLTSDKFSSDPFKPDVIMYRTGDLARRLEDGNIEYIGRADNQVKIRGYRIEPQEIEVTLMNHPDISEAAILIWQDQNGEHELCAYYCSVQKLNTIDLRSYMASELPEYMIPAKWIWVDSIPLTPNGKVDRAALPEPDASISGNPYTAPRNLLEAKLSQLFEDVLKNGHIGIQDNFFDNGGHSLKATVLMSRIAKEFHVQVSLKDIFAHPTVEGLALIIREAEQNLYAAIEPAEKRDTYPVSSAQKRIYVLQQLDEGVAYNMPAVLELEGALDVAKLSAVCKELISRHEPLRTSFVSGADDEPVQRIHTEVPFTLSKETTIEGFVRPFDLSQAPLFRAGLIEVSNEKHVLLVDMHHIISDGVSVQLLIREFTDLYANRQLKPLRIQYKDYAVWQQKFKKGDSYQKQETYWQQQFSGDLPILELPTDKRRPAERQFIGGKVTFQLDKEITARIKRLAHKNRSTLYMTLLALYSAFLSRLSGQDDIVIGSPIAGRPHADLEAVLGMFVNTLALRTRPAGNKTFEEFLKEVRQTALEAYEHQDYPFEELVDKLGVQREMSRNPLFDTTLVLQNMEQQKLKMNDVQLQWNDLEHPISKFDISLYVTEHDSELFCQFEYSTALFEKETIQRWASLFTTLVEHTAASPETELDNIPILTKEEERDFIESCHLFEETGYSMNQTLHYALEQQAEKTPDQAAVIFEDGVMTYKELNEQANRIAWELIGRGVKPETTVAIIGKRSPEMLLGIYGILKAGGAYLPIDPDYPEERISFLLEDSGTNILLLQSAGLHVPEFTGEIVYLNQTNSGLAHRLSNPNVDVLPQSLAYVIYTSGSTGMPKGVEIEHRSAVNFLNSLQSRYQLKHSDMIMHKTSYSFDASIWELFWWPYAGASVYLLPQGGEKEPEVIAKAIEEQKITAMHFVPSMLHAFLEHIKYRSVPIKTNRLKRVFSGGEQLGTHLVSRFYELLPNVSITNSYGPTEATVEAAFFDCPPHEKLERIPIGKPVHHVRLYLLNQNQRMLPVGCIGELYIAGAGVARGYLNRPALTEERFLEDPFYPGERMYKTGDVARWLPDGNVEFLGRTDDQVKIRGYRIEPGEIEAALRSIEGVREAAVTVRTDSGEPELCAYVEGLQRNEVRAQLERLLPGYMVPAYMIEMEQWPVTPSGKLDRNALPAPGGAADAETYTAPRNVTEMKLSQLWEDVLKNGPVGIHDNFFDRGGHSLKATALVSRITKEFDVQVPLKDVFAHPTVEGLATVIREGTDSPYEAIKPAEKQETYPVSSAQKRIYVLQQLEDGGTGYNMPAVLELEGKLNPERMDRAFQELIKRHESLRTSFEQDEGGDPVQRIHDEVPFTLQTTVLGARTEQEAAAAFIKPFDLSQAPLFRAQIVKVSDERHLLLVDMHHIISDGVSVNILIQEFGELYNNRKLPALRIQYKDYAVWQEGFKTGDAYKMQEAYWLKQLEGELPVLDLPADHARPPVRSFAGDKVSFTLEPEVASGLHKLARENGSTLYMVLLAAYTAFLSRLSGQEDIIVGSPIAGRPHKDLEPILGMFVNTLALRTRPEGGKPFVQYLQEVRETALEAFEHQNYPFEELVDKLELTRDMSRNPVFDAMLVVQNNDYEPLHLHDLQMKPAQVSHLVSKFDLTLQASEGDGNIHFLFEYSTALFEKTTIERWASHLTNVLSIIGKNPKVTLNHIDILTQEERHQLLNEFNTGQANQYGVQTISQLFEQQAARTPKASALVSGDKTLTYQELDEWSNGIARALRSRGVKPDTPVGIMMHRSFSMIASILGVWKAGGCYVPIDPEYPKERKRYILSDSGTKLLMTINEADLGVLADFEGEILTIESVEEDDKSPLPQMSSAHHLAYIIYTSGTTGRPKGVMVEHKGIANTLQWRRNAYAFNETDTILQLFSFSFDGFITSMFTPLLSGAKAVLLHEEEAKDILAIKHQLSRQRITHMIIVPVLYRALLDVVQPEDVKTLRVVTLAGEAADRELIARSLAICPHTELANEYGPTENSVATTVMRHMEKQAYVSIGQPIDGTQVLILNSNHQLQPIGVAGELCIAGTGLARGYVNLPELTERAFTQNPFKPEARMYRTGDAARWMADGTLEYLGRIDDQVKIRGYRVETKEIESVIRCIKGVKDAAVVAHVTASGQTELSAYVVTKPGLSTNAVRSELQNKLPVFMHPAFIEKLDSLPLSPNGKLDRGALPKPVYNHEGERPFLPPSSKMEQILADIWKEVLGAEKIGTADSFFELGGDSIKALQVSARLHRIGKQMAVKDLFSHPTIQELAAYIRDSDTSSSQAAVEGDVQWSPVQKWFLSQDIKEKHHFNQSVMLHRSTSVQEDALRKTLKAITCHHDALRMVFTQNEQGKWDQYNRPLSHSDDALYGLQMIDLSAPDGTDGNRPYEPLIKRHVLDIQQKMDLKNGPLLQAGLFHTIDGDFLFLSAHHLVVDGISWRVLLEDLALGYRQAAGGEDIKLPPKTSSFKAYAKKLSDYAESQQLMKQLKYWREAEEYQTEALPFDQIDGTRAHEGQRSTISFTLNDKETAALLKDANSAYNTDTQDMLLASVILALRHWTNQSAFKLSLEGHGREDVLKGIDVSRTIGWFTAIYPLLIKLNADLPDSEESMVHVLKTTKDTLRRVPDKGFGYGVIKYLTPPGKKDINFTGAPEISFNYLGQFESGRTAEVPEEDAFSFSPLGAGGDISTTWNREQSLDISAIAAEGKLTVNMTYDNARFQRKTIEQLSETCRQFLLQLIEHCQNKSETEKTISDFDDQELTEDALQEIADMLSFH.

A condensation 1 region spans residues 7–306 (IQDIYPLSYM…NTMPVRVQGA (300 aa)). The tract at residues 7 to 1043 (IQDIYPLSYM…ALIIREAEQN (1037 aa)) is domain 1 (proline-activating). The segment at 490-889 (TYRELNKAAN…NHPDISEAAI (400 aa)) is adenylation 1. Residues 966-1041 (APRNLLEAKL…GLALIIREAE (76 aa)) enclose the Carrier 1 domain. Ser1001 is subject to O-(pantetheine 4'-phosphoryl)serine. The segment at 1053-1334 (KRDTYPVSSA…NTLALRTRPA (282 aa)) is condensation 2. The tract at residues 1053–2069 (KRDTYPVSSA…TVEGLATVIR (1017 aa)) is domain 2 (glutamine-activating). Residues 1521–1924 (TYKELNEQAN…SIEGVREAAV (404 aa)) are adenylation 2. In terms of domain architecture, Carrier 2 spans 1997–2072 (APRNVTEMKL…GLATVIREGT (76 aa)). Ser2032 is subject to O-(pantetheine 4'-phosphoryl)serine. The interval 2084 to 2374 (KQETYPVSSA…NTLALRTRPE (291 aa)) is condensation 3. The tract at residues 2084 to 3596 (KQETYPVSSA…ELTEDALQEI (1513 aa)) is domain 3 (proline-activating). The tract at residues 2560–2956 (TYQELDEWSN…CIKGVKDAAV (397 aa)) is adenylation 3. The Carrier 3 domain maps to 3034–3108 (PPSSKMEQIL…ELAAYIRDSD (75 aa)). Ser3069 bears the O-(pantetheine 4'-phosphoryl)serine mark. Residues 3116 to 3596 (VEGDVQWSPV…ELTEDALQEI (481 aa)) are epimerization.

Belongs to the ATP-dependent AMP-binding enzyme family. Requires pantetheine 4'-phosphate as cofactor.

Its function is as follows. This protein is a multifunctional enzyme, able to activate and polymerize the amino acids Pro, Gln and Tyr as part of the biosynthesis of the lipopeptide antibiotic plipastatin. The Tyr residue is further epimerized to the D-isomer form. The activation sites for these amino acids consist of individual domains. In Bacillus subtilis (strain 168), this protein is Plipastatin synthase subunit D (ppsD).